The primary structure comprises 412 residues: Argininosuccinate synthase (412 aa).

ATP is bound by residues 12–20 (AYSGGLDTS) and Ala-39. Residues Tyr-91 and Ser-96 each contribute to the L-citrulline site. Gly-121 contacts ATP. Thr-123, Asn-127, and Asp-128 together coordinate L-aspartate. An L-citrulline-binding site is contributed by Asn-127. L-citrulline is bound by residues Arg-131, Ser-180, Ser-189, Glu-265, and Tyr-277.

The protein belongs to the argininosuccinate synthase family. Type 1 subfamily. In terms of assembly, homotetramer.

It is found in the cytoplasm. It catalyses the reaction L-citrulline + L-aspartate + ATP = 2-(N(omega)-L-arginino)succinate + AMP + diphosphate + H(+). It functions in the pathway amino-acid biosynthesis; L-arginine biosynthesis; L-arginine from L-ornithine and carbamoyl phosphate: step 2/3. This is Argininosuccinate synthase from Pseudoalteromonas atlantica (strain T6c / ATCC BAA-1087).